The chain runs to 523 residues: Protein nucleotidyltransferase YdiU (523 aa).

Glycine 101, glycine 103, arginine 104, lysine 128, aspartate 140, glycine 141, arginine 198, and arginine 205 together coordinate ATP. Residue aspartate 275 is the Proton acceptor of the active site. Positions 276 and 285 each coordinate Mg(2+). Residue aspartate 285 participates in ATP binding.

This sequence belongs to the SELO family. It depends on Mg(2+) as a cofactor. Mn(2+) serves as cofactor.

It carries out the reaction L-seryl-[protein] + ATP = 3-O-(5'-adenylyl)-L-seryl-[protein] + diphosphate. It catalyses the reaction L-threonyl-[protein] + ATP = 3-O-(5'-adenylyl)-L-threonyl-[protein] + diphosphate. The enzyme catalyses L-tyrosyl-[protein] + ATP = O-(5'-adenylyl)-L-tyrosyl-[protein] + diphosphate. The catalysed reaction is L-histidyl-[protein] + UTP = N(tele)-(5'-uridylyl)-L-histidyl-[protein] + diphosphate. It carries out the reaction L-seryl-[protein] + UTP = O-(5'-uridylyl)-L-seryl-[protein] + diphosphate. It catalyses the reaction L-tyrosyl-[protein] + UTP = O-(5'-uridylyl)-L-tyrosyl-[protein] + diphosphate. Functionally, nucleotidyltransferase involved in the post-translational modification of proteins. It can catalyze the addition of adenosine monophosphate (AMP) or uridine monophosphate (UMP) to a protein, resulting in modifications known as AMPylation and UMPylation. The protein is Protein nucleotidyltransferase YdiU of Aromatoleum aromaticum (strain DSM 19018 / LMG 30748 / EbN1) (Azoarcus sp. (strain EbN1)).